Reading from the N-terminus, the 84-residue chain is uncharacterized protein (84 aa).

Belongs to the chlamydial CPn_0710/CT_666/TC_0037 family.

This is an uncharacterized protein from Chlamydia pneumoniae (Chlamydophila pneumoniae).